The primary structure comprises 167 residues: 3-dehydroquinate dehydratase (167 aa).

Residue Y22 is the Proton acceptor of the active site. N76, H82, and D89 together coordinate substrate. The active-site Proton donor is H102. Substrate is bound by residues L103 to T104 and R113.

Belongs to the type-II 3-dehydroquinase family. In terms of assembly, homododecamer.

It carries out the reaction 3-dehydroquinate = 3-dehydroshikimate + H2O. It functions in the pathway metabolic intermediate biosynthesis; chorismate biosynthesis; chorismate from D-erythrose 4-phosphate and phosphoenolpyruvate: step 3/7. In terms of biological role, catalyzes a trans-dehydration via an enolate intermediate. The polypeptide is 3-dehydroquinate dehydratase (Helicobacter pylori (strain P12)).